The primary structure comprises 214 residues: Adenylate kinase (214 aa).

Residue 10–15 (GAGKGT) participates in ATP binding. The segment at 30–59 (STGDMLRAAIKEGTPLGLEAKKVMDAGQLI) is NMP. AMP contacts are provided by residues Thr31, Arg36, 57 to 59 (QLI), 85 to 88 (GFPR), and Gln92. The tract at residues 122–159 (GRRVHPGSGRVYHVVYNPPKVADKDNETGEELIIRADD) is LID. ATP is bound by residues Arg123 and 132–133 (VY). Positions 156 and 167 each coordinate AMP. Gln200 lines the ATP pocket.

It belongs to the adenylate kinase family. In terms of assembly, monomer.

Its subcellular location is the cytoplasm. It carries out the reaction AMP + ATP = 2 ADP. It participates in purine metabolism; AMP biosynthesis via salvage pathway; AMP from ADP: step 1/1. Functionally, catalyzes the reversible transfer of the terminal phosphate group between ATP and AMP. Plays an important role in cellular energy homeostasis and in adenine nucleotide metabolism. The polypeptide is Adenylate kinase (Pseudoalteromonas translucida (strain TAC 125)).